The sequence spans 951 residues: Pentatricopeptide repeat-containing protein At4g19220, mitochondrial (951 aa).

The transit peptide at 1–63 (MLLVMVRSST…RHFTSSVLSP (63 aa)) directs the protein to the mitochondrion. PPR repeat units follow at residues 121-151 (DLAT…LKEK), 152-186 (DVIV…GNEF), 187-221 (DSTT…GLVG), 222-252 (DSSL…MEHR), 253-287 (DIVS…GQEA), 288-322 (DTVT…GYSP), 325-355 (HVSV…LVCR), 356-386 (DVIS…MQSV), 392-426 (DIAT…EMQS), 428-458 (ALEV…TTHR), 459-489 (DLVS…VVSE), 496-530 (SLST…GFGD), 531-561 (NMLS…MSET), 563-597 (DLTS…GKIR), 599-629 (DLIT…AIKS), 634-668 (DTQL…NLCS), 669-695 (WNCV…LKLE), 697-731 (NEIT…GFQA), 732-762 (NPFV…SGVN), 763-793 (SISA…LSSN), 799-829 (NKSS…MEEK), and 835-865 (VTEH…IGEP). A type E motif region spans residues 870-945 (VWGALLSACN…LPGYSVIDVR (76 aa)).

Belongs to the PPR family. PCMP-E subfamily.

It is found in the mitochondrion. This chain is Pentatricopeptide repeat-containing protein At4g19220, mitochondrial (PCMP-E2), found in Arabidopsis thaliana (Mouse-ear cress).